A 398-amino-acid polypeptide reads, in one-letter code: 1-deoxy-D-xylulose 5-phosphate reductoisomerase (398 aa).

The NADPH site is built by T10, G11, S12, I13, K37, N38, and N124. 1-deoxy-D-xylulose 5-phosphate is bound at residue K125. E126 lines the NADPH pocket. Residue D150 participates in Mn(2+) binding. 1-deoxy-D-xylulose 5-phosphate-binding residues include S151, E152, S186, and H209. Mn(2+) is bound at residue E152. G215 is a binding site for NADPH. 4 residues coordinate 1-deoxy-D-xylulose 5-phosphate: S222, N227, K228, and E231. E231 serves as a coordination point for Mn(2+).

The protein belongs to the DXR family. Homodimer. Mg(2+) is required as a cofactor. Mn(2+) serves as cofactor.

It carries out the reaction 2-C-methyl-D-erythritol 4-phosphate + NADP(+) = 1-deoxy-D-xylulose 5-phosphate + NADPH + H(+). It participates in isoprenoid biosynthesis; isopentenyl diphosphate biosynthesis via DXP pathway; isopentenyl diphosphate from 1-deoxy-D-xylulose 5-phosphate: step 1/6. Its function is as follows. Catalyzes the NADPH-dependent rearrangement and reduction of 1-deoxy-D-xylulose-5-phosphate (DXP) to 2-C-methyl-D-erythritol 4-phosphate (MEP). The polypeptide is 1-deoxy-D-xylulose 5-phosphate reductoisomerase (Buchnera aphidicola subsp. Schizaphis graminum (strain Sg)).